The chain runs to 341 residues: Very-long-chain 3-oxoacyl-CoA reductase (341 aa).

Residues 15–35 (VVTAFSVIGIVFTILKFTSFA) form a helical membrane-spanning segment. The NADP(+) site is built by valine 61, aspartate 115, asparagine 142, lysine 177, tyrosine 216, lysine 220, valine 249, and serine 251. Tyrosine 216 acts as the Proton donor in catalysis. Residue lysine 220 is the Lowers pKa of active site Tyr of the active site.

It belongs to the short-chain dehydrogenases/reductases (SDR) family.

It localises to the endoplasmic reticulum membrane. It catalyses the reaction a very-long-chain (3R)-3-hydroxyacyl-CoA + NADP(+) = a very-long-chain 3-oxoacyl-CoA + NADPH + H(+). It participates in lipid metabolism; fatty acid biosynthesis. Its function is as follows. Component of the microsomal membrane bound fatty acid elongation system, which produces the 26-carbon very long-chain fatty acids (VLCFA) from palmitate. Catalyzes the reduction of the 3-ketoacyl-CoA intermediate that is formed in each cycle of fatty acid elongation. VLCFAs serve as precursors for ceramide and sphingolipids. The polypeptide is Very-long-chain 3-oxoacyl-CoA reductase (Schizosaccharomyces pombe (strain 972 / ATCC 24843) (Fission yeast)).